The chain runs to 342 residues: Glycerol-3-phosphate dehydrogenase [NAD(P)+] (342 aa).

Tryptophan 11, arginine 31, and lysine 102 together coordinate NADPH. Sn-glycerol 3-phosphate-binding residues include lysine 102 and glycine 132. Alanine 136 contacts NADPH. Sn-glycerol 3-phosphate contacts are provided by lysine 187, aspartate 240, serine 250, arginine 251, and asparagine 252. Catalysis depends on lysine 187, which acts as the Proton acceptor. Arginine 251 lines the NADPH pocket. Glutamate 277 contacts NADPH.

Belongs to the NAD-dependent glycerol-3-phosphate dehydrogenase family.

It is found in the cytoplasm. The enzyme catalyses sn-glycerol 3-phosphate + NAD(+) = dihydroxyacetone phosphate + NADH + H(+). It catalyses the reaction sn-glycerol 3-phosphate + NADP(+) = dihydroxyacetone phosphate + NADPH + H(+). The protein operates within membrane lipid metabolism; glycerophospholipid metabolism. Catalyzes the reduction of the glycolytic intermediate dihydroxyacetone phosphate (DHAP) to sn-glycerol 3-phosphate (G3P), the key precursor for phospholipid synthesis. The polypeptide is Glycerol-3-phosphate dehydrogenase [NAD(P)+] (Symbiobacterium thermophilum (strain DSM 24528 / JCM 14929 / IAM 14863 / T)).